Reading from the N-terminus, the 205-residue chain is Ribonuclease HII (205 aa).

Positions S15–K205 constitute an RNase H type-2 domain. Positions 21, 22, and 117 each coordinate a divalent metal cation.

Belongs to the RNase HII family. Mn(2+) is required as a cofactor. Mg(2+) serves as cofactor.

The protein resides in the cytoplasm. The enzyme catalyses Endonucleolytic cleavage to 5'-phosphomonoester.. Its function is as follows. Endonuclease that specifically degrades the RNA of RNA-DNA hybrids. The sequence is that of Ribonuclease HII from Chlorobaculum parvum (strain DSM 263 / NCIMB 8327) (Chlorobium vibrioforme subsp. thiosulfatophilum).